Consider the following 374-residue polypeptide: Type II methyltransferase M.BbvI (374 aa).

The 345-residue stretch at 3–347 (FRKGELFCGP…EAVLKTFARI (345 aa)) folds into the SAM-dependent MTase C5-type domain. Cys-92 is a catalytic residue.

This sequence belongs to the class I-like SAM-binding methyltransferase superfamily. C5-methyltransferase family.

It catalyses the reaction a 2'-deoxycytidine in DNA + S-adenosyl-L-methionine = a 5-methyl-2'-deoxycytidine in DNA + S-adenosyl-L-homocysteine + H(+). Functionally, a methylase, recognizes the double-stranded sequence 5'-GCAGC-3', methylates C-2 on both strands, and protects the DNA from cleavage by the BbvI endonuclease. The sequence is that of Type II methyltransferase M.BbvI (bbvIM) from Brevibacillus brevis (Bacillus brevis).